The primary structure comprises 111 residues: Small ribosomal subunit protein bS6 (111 aa).

Belongs to the bacterial ribosomal protein bS6 family.

Binds together with bS18 to 16S ribosomal RNA. This Francisella philomiragia subsp. philomiragia (strain ATCC 25017 / CCUG 19701 / FSC 153 / O#319-036) protein is Small ribosomal subunit protein bS6.